Here is a 367-residue protein sequence, read N- to C-terminus: Histidinol-phosphate aminotransferase 1 (367 aa).

Lys-226 carries the post-translational modification N6-(pyridoxal phosphate)lysine.

It belongs to the class-II pyridoxal-phosphate-dependent aminotransferase family. Histidinol-phosphate aminotransferase subfamily. In terms of assembly, homodimer. Pyridoxal 5'-phosphate is required as a cofactor.

It carries out the reaction L-histidinol phosphate + 2-oxoglutarate = 3-(imidazol-4-yl)-2-oxopropyl phosphate + L-glutamate. Its pathway is amino-acid biosynthesis; L-histidine biosynthesis; L-histidine from 5-phospho-alpha-D-ribose 1-diphosphate: step 7/9. This is Histidinol-phosphate aminotransferase 1 (hisC1) from Haemophilus influenzae (strain ATCC 51907 / DSM 11121 / KW20 / Rd).